The following is a 138-amino-acid chain: Large ribosomal subunit protein bL19 (138 aa).

It belongs to the bacterial ribosomal protein bL19 family.

Its function is as follows. This protein is located at the 30S-50S ribosomal subunit interface and may play a role in the structure and function of the aminoacyl-tRNA binding site. This is Large ribosomal subunit protein bL19 from Leptospira interrogans serogroup Icterohaemorrhagiae serovar copenhageni (strain Fiocruz L1-130).